A 23-amino-acid chain; its full sequence is Thylakoid lumenal 17.4 kDa protein (23 aa).

Residues 1 to 23 (ANQRLPPLSNDPDRCERAFVGNT) are disordered.

It localises to the plastid. It is found in the chloroplast thylakoid lumen. The polypeptide is Thylakoid lumenal 17.4 kDa protein (Spinacia oleracea (Spinach)).